The following is a 304-amino-acid chain: Putative S-adenosyl-L-methionine-dependent methyltransferase MMAR_1057 (304 aa).

S-adenosyl-L-methionine-binding positions include Asp130 and 159–160 (DL).

It belongs to the UPF0677 family.

Its function is as follows. Exhibits S-adenosyl-L-methionine-dependent methyltransferase activity. This is Putative S-adenosyl-L-methionine-dependent methyltransferase MMAR_1057 from Mycobacterium marinum (strain ATCC BAA-535 / M).